Reading from the N-terminus, the 223-residue chain is tRNA (guanine-N(7)-)-methyltransferase (223 aa).

Positions 45, 70, and 125 each coordinate S-adenosyl-L-methionine. Asp-125 is an active-site residue. Residues Lys-129, Asp-161, and 201–204 (TEYE) contribute to the substrate site.

Belongs to the class I-like SAM-binding methyltransferase superfamily. TrmB family.

The catalysed reaction is guanosine(46) in tRNA + S-adenosyl-L-methionine = N(7)-methylguanosine(46) in tRNA + S-adenosyl-L-homocysteine. It participates in tRNA modification; N(7)-methylguanine-tRNA biosynthesis. In terms of biological role, catalyzes the formation of N(7)-methylguanine at position 46 (m7G46) in tRNA. The polypeptide is tRNA (guanine-N(7)-)-methyltransferase (Mesoplasma florum (strain ATCC 33453 / NBRC 100688 / NCTC 11704 / L1) (Acholeplasma florum)).